Consider the following 760-residue polypeptide: Xaa-Pro dipeptidyl-peptidase (760 aa).

Active-site charge relay system residues include serine 349, aspartate 469, and histidine 499.

The protein belongs to the peptidase S15 family. As to quaternary structure, homodimer.

It localises to the cytoplasm. The catalysed reaction is Hydrolyzes Xaa-Pro-|- bonds to release unblocked, N-terminal dipeptides from substrates including Ala-Pro-|-p-nitroanilide and (sequentially) Tyr-Pro-|-Phe-Pro-|-Gly-Pro-|-Ile.. Functionally, removes N-terminal dipeptides sequentially from polypeptides having unsubstituted N-termini provided that the penultimate residue is proline. The sequence is that of Xaa-Pro dipeptidyl-peptidase from Streptococcus pyogenes serotype M5 (strain Manfredo).